An 83-amino-acid chain; its full sequence is Small ribosomal subunit protein uS17 (83 aa).

This sequence belongs to the universal ribosomal protein uS17 family. Part of the 30S ribosomal subunit.

Its function is as follows. One of the primary rRNA binding proteins, it binds specifically to the 5'-end of 16S ribosomal RNA. The sequence is that of Small ribosomal subunit protein uS17 from Pseudoalteromonas atlantica (strain T6c / ATCC BAA-1087).